A 312-amino-acid polypeptide reads, in one-letter code: Acetyl-coenzyme A carboxylase carboxyl transferase subunit alpha (312 aa).

Residues 36–286 (NLEKEISKTY…ADYVKKSLNE (251 aa)) enclose the CoA carboxyltransferase C-terminal domain.

This sequence belongs to the AccA family. In terms of assembly, acetyl-CoA carboxylase is a heterohexamer composed of biotin carboxyl carrier protein (AccB), biotin carboxylase (AccC) and two subunits each of ACCase subunit alpha (AccA) and ACCase subunit beta (AccD).

It is found in the cytoplasm. The catalysed reaction is N(6)-carboxybiotinyl-L-lysyl-[protein] + acetyl-CoA = N(6)-biotinyl-L-lysyl-[protein] + malonyl-CoA. It functions in the pathway lipid metabolism; malonyl-CoA biosynthesis; malonyl-CoA from acetyl-CoA: step 1/1. Its function is as follows. Component of the acetyl coenzyme A carboxylase (ACC) complex. First, biotin carboxylase catalyzes the carboxylation of biotin on its carrier protein (BCCP) and then the CO(2) group is transferred by the carboxyltransferase to acetyl-CoA to form malonyl-CoA. The chain is Acetyl-coenzyme A carboxylase carboxyl transferase subunit alpha from Campylobacter jejuni subsp. jejuni serotype O:6 (strain 81116 / NCTC 11828).